We begin with the raw amino-acid sequence, 323 residues long: Ferrochelatase (323 aa).

Positions 195 and 276 each coordinate Fe cation.

Belongs to the ferrochelatase family.

The protein resides in the cytoplasm. The enzyme catalyses heme b + 2 H(+) = protoporphyrin IX + Fe(2+). Its pathway is porphyrin-containing compound metabolism; protoheme biosynthesis; protoheme from protoporphyrin-IX: step 1/1. Its function is as follows. Catalyzes the ferrous insertion into protoporphyrin IX. In Mannheimia succiniciproducens (strain KCTC 0769BP / MBEL55E), this protein is Ferrochelatase.